The chain runs to 478 residues: MAGVEEASSFGGHLNRDLDPDDREEGTSSTAEEAAKKKRRKKKKGKGAVSAGQQELDKESGTSVDEVAKQLERQALEEKEKDDDDEDGDGDGDGAAGKKKKKKKKKRGPRVQTDPPSVPICDLYPNGVFPKGQECEYPPTQDGRTAAWRTTSEEKKALDQASEEIWNDFREAAEAHRQVRKYVMSWIKPGMTMIEICEKLEDCSRKLIKENGLNAGLAFPTGCSLNNCAAHYTPNAGDTTVLQYDDICKIDFGTHISGRIIDCAFTVTFNPKYDILLKAVKDATNTGIKCAGIDVRLCDVGEAIQEVMESYEVEIDGKTYQVKPIRNLNGHSIGPYRIHAGKTVPIVKGGEATRMEEGEVYAIETFGSTGKGVVHDDMECSHYMKNFDVGHVPIRLPRTKHLLNVINENFGTLAFCRRWLDRLGESKYLMALKNLCDLGIVDPYPPLCDIKGSYTAQFEHTILLRPTCKEVVSRGDDY.

Residues 1–123 (MAGVEEASSF…DPPSVPICDL (123 aa)) are disordered. Alanine 2 is subject to N-acetylalanine. A compositionally biased stretch (basic residues) spans 36–46 (KKKRRKKKKGK). The span at 55–79 (ELDKESGTSVDEVAKQLERQALEEK) shows a compositional bias: basic and acidic residues. A phosphoserine; alternate mark is found at serine 60 and serine 63. Serine 60 and serine 63 each carry an O-linked (GlcNAc) serine; alternate glycan. The segment covering 80 to 92 (EKDDDDEDGDGDG) has biased composition (acidic residues). Over residues 97-109 (GKKKKKKKKKRGP) the composition is skewed to basic residues. Histidine 231 contributes to the substrate binding site. Residues aspartate 251, aspartate 262, and histidine 331 each coordinate a divalent metal cation. Residue histidine 339 coordinates substrate. Positions 364 and 459 each coordinate a divalent metal cation.

The protein belongs to the peptidase M24A family. Methionine aminopeptidase eukaryotic type 2 subfamily. As to quaternary structure, binds EIF2S1 at low magnesium concentrations. Interacts strongly with the eIF-2 gamma-subunit EIF2S3. Requires Co(2+) as cofactor. It depends on Zn(2+) as a cofactor. Mn(2+) is required as a cofactor. The cofactor is Fe(2+). O-glycosylated; contains 12 O-linked GlcNAc. Post-translationally, contains approximately 12 O-linked N-acetylglucosamine (GlcNAc) residues. O-glycosylation is required for EIF2S1 binding.

Its subcellular location is the cytoplasm. It carries out the reaction Release of N-terminal amino acids, preferentially methionine, from peptides and arylamides.. Functionally, cotranslationally removes the N-terminal methionine from nascent proteins. The N-terminal methionine is often cleaved when the second residue in the primary sequence is small and uncharged (Met-Ala-, Cys, Gly, Pro, Ser, Thr, or Val). Protects eukaryotic initiation factor EIF2S1 from translation-inhibiting phosphorylation by inhibitory kinases such as EIF2AK2/PKR and EIF2AK1/HCR. Plays a critical role in the regulation of protein synthesis. This Rattus norvegicus (Rat) protein is Methionine aminopeptidase 2 (Metap2).